The following is an 829-amino-acid chain: Periplasmic nitrate reductase (829 aa).

The signal sequence occupies residues 1 to 30; it reads MNSPRPTPPPFAAAAAGLPILVRASNLVTE. Residues 36–92 enclose the 4Fe-4S Mo/W bis-MGD-type domain; that stretch reads LVWNKAPCRFCGTGCSVMVATRDGQVVATHGDIKAEVNRGINCVKGYFLSKIMYGSD. [4Fe-4S] cluster is bound by residues Cys-43, Cys-46, Cys-50, and Cys-78. Mo-bis(molybdopterin guanine dinucleotide) is bound by residues Lys-80, Gln-147, Asn-172, Cys-176, 209 to 216, 240 to 244, 259 to 261, Met-370, Gln-374, Asn-480, 506 to 507, Lys-529, Asp-556, and 716 to 725; these read WGSNMAEM, STFEH, QTD, SD, and TGRVLEHWHT. A substrate-binding site is contributed by Phe-792. 2 residues coordinate Mo-bis(molybdopterin guanine dinucleotide): Asn-800 and Lys-817.

The protein belongs to the prokaryotic molybdopterin-containing oxidoreductase family. NasA/NapA/NarB subfamily. As to quaternary structure, component of the periplasmic nitrate reductase NapAB complex composed of NapA and NapB. The cofactor is [4Fe-4S] cluster. Mo-bis(molybdopterin guanine dinucleotide) serves as cofactor.

It localises to the periplasm. It carries out the reaction 2 Fe(II)-[cytochrome] + nitrate + 2 H(+) = 2 Fe(III)-[cytochrome] + nitrite + H2O. Functionally, catalytic subunit of the periplasmic nitrate reductase complex NapAB. Receives electrons from NapB and catalyzes the reduction of nitrate to nitrite. In Pseudomonas aeruginosa (strain ATCC 15692 / DSM 22644 / CIP 104116 / JCM 14847 / LMG 12228 / 1C / PRS 101 / PAO1), this protein is Periplasmic nitrate reductase.